The following is a 156-amino-acid chain: Small ribosomal subunit protein uS7 (156 aa).

Belongs to the universal ribosomal protein uS7 family. Part of the 30S ribosomal subunit. Contacts proteins S9 and S11.

One of the primary rRNA binding proteins, it binds directly to 16S rRNA where it nucleates assembly of the head domain of the 30S subunit. Is located at the subunit interface close to the decoding center, probably blocks exit of the E-site tRNA. The chain is Small ribosomal subunit protein uS7 from Acinetobacter baumannii (strain AB307-0294).